Reading from the N-terminus, the 375-residue chain is Proclotting enzyme (375 aa).

The signal sequence occupies residues 1-21; the sequence is MLVNNVFSLLCFPLLMSVVRC. Residues 22-27 constitute a propeptide that is removed on maturation; that stretch reads STLSRQ. Q30 bears the Pyrrolidone carboxylic acid mark. The Clip domain maps to 39 to 84; the sequence is LCSNRFTEEGTCKNVLDCRILLQKNDYNLLKESICGFEGITPKVCC. 3 disulfide bridges follow: C40-C83, C50-C73, and C56-C84. The interval 90–113 is disordered; that stretch reads VISSTQAPPETTTTERPPKQIPPN. Disulfide bonds link C118/C248, C157/C173, C295/C311, and C322/C351. N-linked (GlcNAc...) asparagine glycosylation occurs at N122. A Peptidase S1 domain is found at 128-375; it reads IIGGREAPIG…FLDWIAEHMV (248 aa). The Charge relay system role is filled by H172. Ca(2+)-binding residues include E194, N196, S199, and D202. The active-site Charge relay system is the D228. Residues N235 and N304 are each glycosylated (N-linked (GlcNAc...) asparagine). Catalysis depends on S326, which acts as the Charge relay system.

This sequence belongs to the peptidase S1 family. CLIP subfamily. In the active form, heterodimer of a light chain and a heavy chain; disulfide-linked. Forms a covalent heterodimer with intracellular coagulation inhibitor 2/LICI-2. Post-translationally, proteolytically cleaved into its mature active form by serine protease factor B. Cleavage produces a 25 kDa light chain containing the CLIP domain and a catalytic 31 kDa heavy chain which remain covalently associated through an interchain disulfide bond. Proteolytically cleaved by clotting factor G subunit beta. Contains six O-linked carbohydrate chains in the N-terminal light chain. As to expression, expressed in hemocytes (at protein level).

It localises to the cytoplasmic vesicle. The protein resides in the secretory vesicle. Its subcellular location is the secreted. The catalysed reaction is Selective cleavage of 18-Arg-|- and 47-Arg-|- bonds in coagulogen to form coagulin and fragments.. Inhibited by intracellular coagulation inhibitor 2/LICI-2 and to a lesser extent by intracellular coagulation inhibitor 3/LICI-3. Functionally, this enzyme is closely associated with an endotoxin-sensitive hemolymph coagulation system in limulus. Its active form catalyzes the conversion of coagulogen to insoluble coagulin gel. This is Proclotting enzyme from Tachypleus tridentatus (Japanese horseshoe crab).